A 984-amino-acid polypeptide reads, in one-letter code: Translation initiation factor IF-2 (984 aa).

2 disordered regions span residues 92–267 (KKRT…ERRR) and 280–392 (MNAP…EEHV). Low complexity predominate over residues 104–123 (PATPEVQPVAEAPAAAPAAP). Over residues 124–177 (RIDEAELARREEEARRQAELIRRQEEELAEKRRLREEAEAREREQAEKAERAEQ) the composition is skewed to basic and acidic residues. The segment covering 193–235 (DAAAAAPAKEAAKPAAAPVAAAAAAAEQQAADTKLAAQTAATQ) has biased composition (low complexity). Composition is skewed to basic and acidic residues over residues 236 to 267 (AKED…ERRR) and 291 to 302 (KAPEKPQPEKAA). Positions 310-335 (PAAPAARPGAPAAPGAAAAPGAAGAG) are enriched in low complexity. Over residues 351–361 (PAKKKEIKTRG) the composition is skewed to basic and acidic residues. Over residues 363–375 (ASGGVGRGNWRGG) the composition is skewed to gly residues. A compositionally biased stretch (basic and acidic residues) spans 381–392 (GSNDRGGHEEHV). The tr-type G domain occupies 484-653 (PRAPVVTVMG…LLQAEVLELK (170 aa)). Residues 493–500 (GHVDHGKT) are G1. 493–500 (GHVDHGKT) lines the GTP pocket. Residues 518-522 (GITQH) form a G2 region. The tract at residues 539–542 (DTPG) is G3. GTP-binding positions include 539 to 543 (DTPGH) and 593 to 596 (NKID). A G4 region spans residues 593 to 596 (NKID). Positions 629-631 (SAK) are G5.

Belongs to the TRAFAC class translation factor GTPase superfamily. Classic translation factor GTPase family. IF-2 subfamily.

The protein localises to the cytoplasm. Functionally, one of the essential components for the initiation of protein synthesis. Protects formylmethionyl-tRNA from spontaneous hydrolysis and promotes its binding to the 30S ribosomal subunits. Also involved in the hydrolysis of GTP during the formation of the 70S ribosomal complex. The protein is Translation initiation factor IF-2 of Variovorax paradoxus (strain S110).